A 391-amino-acid polypeptide reads, in one-letter code: BRCA1-A complex subunit Abraxas 1 (391 aa).

Positions 8–156 (VRISGFVLSS…THRLEFSAFI (149 aa)) constitute an MPN domain. Positions 223–261 (LLAEMQKVCVEVEKSERTVEKLQEDIAQLKEAIGKQKTH) form a coiled coil. Residues 354-391 (QRLKRKRKTREVSESASESGSDTEIEMNGQSGSNSPVF) form a disordered region. The span at 367 to 391 (ESASESGSDTEIEMNGQSGSNSPVF) shows a compositional bias: polar residues. At Ser-388 the chain carries Phosphoserine. Residues 388 to 391 (SPVF) carry the pSXXF motif motif.

The protein belongs to the FAM175 family. Abraxas subfamily. Component of the ARISC complex. Component of the BRCA1-A complex. Homodimer. In terms of processing, phosphorylation of Ser-388 of the pSXXF motif by ATM or ATR constitutes a specific recognition motif for the BRCT domain of BRCA1.

The protein localises to the nucleus. Its function is as follows. Involved in DNA damage response and double-strand break (DSB) repair. Component of the BRCA1-A complex, acting as a central scaffold protein that assembles the various components of the complex. The BRCA1-A complex specifically recognizes 'Lys-63'-linked ubiquitinated histones H2A and H2AX at DNA lesion sites. This complex also possesses deubiquitinase activity that specifically removes 'Lys-63'-linked ubiquitin on histones H2A and H2AX. This chain is BRCA1-A complex subunit Abraxas 1, found in Danio rerio (Zebrafish).